Here is an 89-residue protein sequence, read N- to C-terminus: Bombyxin B-1 (89 aa).

The N-terminal stretch at 1 to 19 (MKTSVMFMLVIVISLMCSG) is a signal peptide. Disulfide bonds link Cys-29-Cys-75, Cys-41-Cys-88, and Cys-74-Cys-79. Residues 48-66 (GGAQYAPYFWTRQYLGSRG) constitute a propeptide, c peptide like.

It belongs to the insulin family. As to quaternary structure, heterodimer of a B chain and an A chain linked by two disulfide bonds.

Its subcellular location is the secreted. Brain peptide responsible for activation of prothoracic glands to produce ecdysone in insects. This Bombyx mori (Silk moth) protein is Bombyxin B-1 (BBXB1).